The chain runs to 134 residues: Small ribosomal subunit protein uS8c (134 aa).

It belongs to the universal ribosomal protein uS8 family. In terms of assembly, part of the 30S ribosomal subunit.

It localises to the plastid. Its subcellular location is the chloroplast. Its function is as follows. One of the primary rRNA binding proteins, it binds directly to 16S rRNA central domain where it helps coordinate assembly of the platform of the 30S subunit. This Cucumis sativus (Cucumber) protein is Small ribosomal subunit protein uS8c (rps8).